Reading from the N-terminus, the 384-residue chain is Eukaryotic translation initiation factor 3 subunit M (384 aa).

A PCI domain is found at 184 to 346 (ENRKAIEAMI…KKILITGAFP (163 aa)).

The protein belongs to the eIF-3 subunit M family. As to quaternary structure, component of the eukaryotic translation initiation factor 3 (eIF-3) complex.

It localises to the cytoplasm. Functionally, component of the eukaryotic translation initiation factor 3 (eIF-3) complex, which is involved in protein synthesis of a specialized repertoire of mRNAs and, together with other initiation factors, stimulates binding of mRNA and methionyl-tRNAi to the 40S ribosome. The eIF-3 complex specifically targets and initiates translation of a subset of mRNAs involved in cell proliferation. This is Eukaryotic translation initiation factor 3 subunit M from Schistosoma japonicum (Blood fluke).